Reading from the N-terminus, the 340-residue chain is Extracellular matrix protein-binding protein emp (340 aa).

An N-terminal signal peptide occupies residues 1–26 (MKKKLLVLTMSTLFATQLINSNHAKA).

The protein resides in the cell surface. Its function is as follows. Adhesin that binds to the host cell extracellular matrix proteins fibronectin, fibrinogen, collagen, and vitronectin. The protein is Extracellular matrix protein-binding protein emp (emp) of Staphylococcus aureus (strain Mu50 / ATCC 700699).